The primary structure comprises 158 residues: Endoribonuclease YbeY (158 aa).

Residues His118, His122, and His128 each contribute to the Zn(2+) site.

It belongs to the endoribonuclease YbeY family. Zn(2+) is required as a cofactor.

It is found in the cytoplasm. In terms of biological role, single strand-specific metallo-endoribonuclease involved in late-stage 70S ribosome quality control and in maturation of the 3' terminus of the 16S rRNA. This Bartonella quintana (strain Toulouse) (Rochalimaea quintana) protein is Endoribonuclease YbeY.